A 211-amino-acid polypeptide reads, in one-letter code: Urease accessory protein UreF (211 aa).

It belongs to the UreF family. UreD, UreF and UreG form a complex that acts as a GTP-hydrolysis-dependent molecular chaperone, activating the urease apoprotein by helping to assemble the nickel containing metallocenter of UreC. The UreE protein probably delivers the nickel.

The protein resides in the cytoplasm. Functionally, required for maturation of urease via the functional incorporation of the urease nickel metallocenter. The chain is Urease accessory protein UreF from Mycobacterium sp. (strain JLS).